Consider the following 355-residue polypeptide: Elongation factor Ts (355 aa).

Residues 82-85 (TDFV) are involved in Mg(2+) ion dislocation from EF-Tu.

The protein belongs to the EF-Ts family.

The protein localises to the cytoplasm. Functionally, associates with the EF-Tu.GDP complex and induces the exchange of GDP to GTP. It remains bound to the aminoacyl-tRNA.EF-Tu.GTP complex up to the GTP hydrolysis stage on the ribosome. The protein is Elongation factor Ts of Helicobacter pylori (strain Shi470).